Reading from the N-terminus, the 800-residue chain is MPRAPALLFSCLLGLCALVPRLPGLNICTSGSATSCEECLLIHPKCAWCFKEDFGSLRSVTSRCDLKANLIRNGCGVEFESPASSTQVLRSLPLSSKGSSPAGSDVIQLTPQEVTVTLRPGDRTAFQLQVRQVEDYPVDLYYLMDLSLSMKDDLENIRSLGTKLAEEMRKLTSNFRLGFGSFVDKNISPFSYTAPRYQTNPCIGYKLFPNCVPSFGFRHLLPLTDRVDSFNEEVRKQRVSRNRDAPEGGFDAVLQAAVCKEKIGWRKDALHLLVFTTDDVPHIALDGKLGGLVQPHDGQCHLNEANEYTASNQMDYPSLALLGEKLAENNINLIFAVTKNHYMLYKNFTALIPGTTVEILHGDSKNILQLIINAYNSIRSKVELSVWDQPEDLNLFFTATCQDGVSYPGQRKCEGLKIGDTASFEVSVEARSCPSKHVQHTFTLRPVGFRDSLEVGVTYNCRCGCSAGLEPDSARCSSNGTYVCGLCECNPGYLGTRCECQEGESQSGYQNLCREAEGKPLCSGRGQCSCNQCSCFESEFGKIYGSFCECDNFSCARNKGVLCSGHGECHCGECKCHAGYIGDNCNCSTDISTCQARDGHICSDRGHCVCGQCQCTEPGAFGETCEKCPTCPDACSTKRDCVECLLLHSGSSADNQTCQNLCKDEVITRVDTIVKDDQEAVLCFYKTAKDCVMMFTYSELPSGKSNLTVLREPECGTAPSAMTILLAVVGSILLTGFALLVIWKLLVTIHDRREFAKFQSERSRARYEMASNPLYRKPISTHTVDFTFNKFNKSYNGTVD.

The N-terminal stretch at 1–24 (MPRAPALLFSCLLGLCALVPRLPG) is a signal peptide. Topologically, residues 25 to 722 (LNICTSGSAT…PECGTAPSAM (698 aa)) are extracellular. In terms of domain architecture, PSI spans 27-76 (ICTSGSATSCEECLLIHPKCAWCFKEDFGSLRSVTSRCDLKANLIRNGCG). Cystine bridges form between Cys-28–Cys-46, Cys-36–Cys-463, Cys-39–Cys-64, Cys-49–Cys-75, Cys-202–Cys-211, Cys-259–Cys-300, Cys-401–Cys-413, Cys-433–Cys-461, Cys-465–Cys-484, Cys-476–Cys-487, Cys-489–Cys-498, Cys-500–Cys-530, Cys-513–Cys-528, Cys-522–Cys-533, Cys-535–Cys-548, Cys-550–Cys-571, Cys-555–Cys-569, Cys-563–Cys-574, and Cys-576–Cys-585. In terms of domain architecture, VWFA spans 136–378 (YPVDLYYLMD…QLIINAYNSI (243 aa)). Ser-147 and Ser-149 together coordinate Mg(2+). Ca(2+) contacts are provided by Ser-149, Asp-152, Asp-153, and Asp-184. Residues Asn-242, Asp-244, Pro-246, and Glu-247 each contribute to the Ca(2+) site. Residue Glu-247 participates in Mg(2+) binding. A glycan (N-linked (GlcNAc...) asparagine) is linked at Asn-347. Residue Gly-362 participates in Ca(2+) binding. I-EGF domains lie at 465–499 (CSAG…TRCE), 500–549 (CQEG…SFCE), 550–586 (CDNF…DNCN), and 587–626 (CSTD…ETCE). N-linked (GlcNAc...) asparagine glycosylation occurs at Asn-479. An N-linked (GlcNAc...) asparagine glycan is attached at Asn-552. An N-linked (GlcNAc...) asparagine glycan is attached at Asn-586. Intrachain disulfides connect Cys-587–Cys-610, Cys-594–Cys-608, Cys-602–Cys-613, Cys-615–Cys-625, Cys-628–Cys-631, Cys-635–Cys-683, Cys-641–Cys-662, Cys-644–Cys-658, and Cys-691–Cys-715. N-linked (GlcNAc...) asparagine glycosylation is found at Asn-655 and Asn-706. The helical transmembrane segment at 723 to 743 (TILLAVVGSILLTGFALLVIW) threads the bilayer. Topologically, residues 744-800 (KLLVTIHDRREFAKFQSERSRARYEMASNPLYRKPISTHTVDFTFNKFNKSYNGTVD) are cytoplasmic. The residue at position 771 (Ser-771) is a Phosphoserine.

The protein belongs to the integrin beta chain family. Heterodimer of an alpha and a beta subunit. Beta-5 (ITGB5) associates with alpha-V (ITGAV). Interacts with MYO10. Interacts with DAB2. Integrin ITGAV:ITGB5 interacts with FBLN5 (via N-terminus). ITGAV:ITGB5 interacts with CCN3. Interacts with tensin TNS3; TNS3 also interacts with PEAK1, thus acting as an adapter molecule to bridge the association of PEAK1 with ITGB5.

It is found in the cell membrane. Functionally, integrin alpha-V/beta-5 (ITGAV:ITGB5) is a receptor for fibronectin. It recognizes the sequence R-G-D in its ligand. The protein is Integrin beta-5 (ITGB5) of Bos taurus (Bovine).